A 1190-amino-acid polypeptide reads, in one-letter code: Phosphatidylinositol 3,4,5-trisphosphate 5-phosphatase 1 (1190 aa).

The 97-residue stretch at 8 to 104 (WNHGNITRSK…GLVTHLQFPV (97 aa)) folds into the SH2 domain. Residues 111–120 (AIDEPEEDTE) are compositionally biased toward acidic residues. Positions 111–130 (AIDEPEEDTESVMSPPELPP) are disordered. Positions 126 to 131 (PELPPR) match the SH3-binding 1 motif. Phosphoserine is present on S245. An NPXY motif 1 motif is present at residues 914–917 (NPNY). At Y917 the chain carries Phosphotyrosine. Position 934 is a phosphoserine (S934). Phosphotyrosine is present on Y944. The disordered stretch occupies residues 946–1190 (QLPKDSSLGP…ESLLGRTAMQ (245 aa)). Residues 961–971 (PPTPPSQPPLS) show a composition bias toward pro residues. T963 carries the post-translational modification Phosphothreonine. Phosphoserine occurs at positions 966 and 971. The SH3-binding 2 signature appears at 969–974 (PLSPKK). Over residues 989–998 (QETRPGDLGK) the composition is skewed to basic and acidic residues. The interval 1014–1028 (MFENPLYGSVSPFPK) is interaction with DAB2. The short motif at 1017 to 1020 (NPLY) is the NPXY motif 2 element. Phosphotyrosine is present on Y1020. Residues 1031–1045 (PRKEQESPKMMRKEP) are compositionally biased toward basic and acidic residues. Positions 1038–1049 (PKMMRKEPPPCP) match the SH3-binding 3 motif. The span at 1140–1149 (IPAPRPPLPV) shows a compositional bias: pro residues. Residues 1161 to 1183 (KGRDYRDNTELPHHGKHRQEESL) show a composition bias toward basic and acidic residues.

It belongs to the inositol 1,4,5-trisphosphate 5-phosphatase family. Interacts with tyrosine phosphorylated forms of SHC1. Interacts with tyrosine phosphorylated form of DOK1. Interacts with tyrosine phosphorylated form of DOK3. Interacts with tyrosine phosphorylated form of SLAMF1/CD150. Interacts with PTPN11/SHP-2 in response to IL-3. Interacts with receptor EPOR. Interacts with receptors MS4A2/FCER1B and FCER1G. Interacts with receptors FCGR2B and FCGR3. Interacts with receptor FCGR2A, leading to regulate gene expression during the phagocytic process. Interacts with GRB2. Interacts with PLCG1. Interacts with tyrosine kinases SRC and TEC. Interacts with c-Met/MET. Interacts with MILR1 (tyrosine-phosphorylated). Can weakly interact (via NPXY motif 2) with DAB2 (via PID domain); the interaction is impaired by tyrosine phosphorylation of the NPXY motif. Interacts (via SH2 domain) with tyrosine phosphorylated KLRC1 (via ITIM). Interacts with MPL/TPOR. Post-translationally, tyrosine phosphorylated by the members of the SRC family after exposure to a diverse array of extracellular stimuli such as cytokines, growth factors, antibodies, chemokines, integrin ligands and hypertonic and oxidative stress. Phosphorylated upon IgG receptor FCGR2B-binding.

It localises to the cytoplasm. The protein resides in the cell membrane. It is found in the membrane raft. Its subcellular location is the cytoskeleton. It carries out the reaction a 1,2-diacyl-sn-glycero-3-phospho-(1D-myo-inositol-3,4,5-trisphosphate) + H2O = a 1,2-diacyl-sn-glycero-3-phospho-(1D-myo-inositol-3,4-bisphosphate) + phosphate. It catalyses the reaction 1D-myo-inositol 1,3,4,5-tetrakisphosphate + H2O = 1D-myo-inositol 1,3,4-trisphosphate + phosphate. The enzyme catalyses a 1,2-diacyl-sn-glycero-3-phospho-(1D-myo-inositol-4,5-bisphosphate) + H2O = a 1,2-diacyl-sn-glycero-3-phospho-(1D-myo-inositol 4-phosphate) + phosphate. Activated upon translocation to the sites of synthesis of PtdIns(3,4,5)P3 in the membrane. Its function is as follows. Phosphatidylinositol (PtdIns) phosphatase that specifically hydrolyzes the 5-phosphate of phosphatidylinositol-3,4,5-trisphosphate (PtdIns(3,4,5)P3) to produce PtdIns(3,4)P2, thereby negatively regulating the PI3K (phosphoinositide 3-kinase) pathways. Also able to hydrolyze the 5-phosphate of phosphatidylinositol-4,5-bisphosphate (PtdIns(4,5)P3) and inositol 1,3,4,5-tetrakisphosphate. Acts as a negative regulator of B-cell antigen receptor signaling. Mediates signaling from the FC-gamma-RIIB receptor (FCGR2B), playing a central role in terminating signal transduction from activating immune/hematopoietic cell receptor systems. Acts as a negative regulator of myeloid cell proliferation/survival and chemotaxis, mast cell degranulation, immune cells homeostasis, integrin alpha-IIb/beta-3 signaling in platelets and JNK signaling in B-cells. Regulates proliferation of osteoclast precursors, macrophage programming, phagocytosis and activation and is required for endotoxin tolerance. Involved in the control of cell-cell junctions, CD32a signaling in neutrophils and modulation of EGF-induced phospholipase C activity. Key regulator of neutrophil migration, by governing the formation of the leading edge and polarization required for chemotaxis. Modulates FCGR3/CD16-mediated cytotoxicity in NK cells. Mediates the activin/TGF-beta-induced apoptosis through its Smad-dependent expression. The chain is Phosphatidylinositol 3,4,5-trisphosphate 5-phosphatase 1 (Inpp5d) from Rattus norvegicus (Rat).